A 73-amino-acid polypeptide reads, in one-letter code: Small ribosomal subunit protein bS18c (73 aa).

This sequence belongs to the bacterial ribosomal protein bS18 family. In terms of assembly, part of the 30S ribosomal subunit.

The protein localises to the plastid. It is found in the chloroplast. This Nephroselmis olivacea (Green alga) protein is Small ribosomal subunit protein bS18c.